The primary structure comprises 23 residues: Thylakoid lumenal 17.4 kDa protein (23 aa).

The disordered stretch occupies residues 1–23; that stretch reads ANQRLPPLSNDPDRCERAFVGNT.

It is found in the plastid. The protein localises to the chloroplast thylakoid lumen. In Spinacia oleracea (Spinach), this protein is Thylakoid lumenal 17.4 kDa protein.